We begin with the raw amino-acid sequence, 125 residues long: Large ribosomal subunit protein bL12 (125 aa).

Belongs to the bacterial ribosomal protein bL12 family. In terms of assembly, homodimer. Part of the ribosomal stalk of the 50S ribosomal subunit. Forms a multimeric L10(L12)X complex, where L10 forms an elongated spine to which 2 to 4 L12 dimers bind in a sequential fashion. Binds GTP-bound translation factors.

Its function is as follows. Forms part of the ribosomal stalk which helps the ribosome interact with GTP-bound translation factors. Is thus essential for accurate translation. The polypeptide is Large ribosomal subunit protein bL12 (Rickettsia felis (strain ATCC VR-1525 / URRWXCal2) (Rickettsia azadi)).